A 125-amino-acid chain; its full sequence is Translation initiation factor 5A (125 aa).

Lys-35 is subject to Hypusine.

Belongs to the eIF-5A family.

The protein localises to the cytoplasm. Its function is as follows. Functions by promoting the formation of the first peptide bond. This is Translation initiation factor 5A (eIF5A) from Methanoculleus marisnigri (strain ATCC 35101 / DSM 1498 / JR1).